Here is a 496-residue protein sequence, read N- to C-terminus: MMNTKTFTSVNRVIYDDNYSLKQQQKSSFINQFLKGLLSAITLLFFILLLIFAENTLFGLGFGDENKSMMISKSLNAFFDLHSPKYLQLNFLIVFRFFILSFTLFYTLIKNFTNLYWHRATIKKYLPWFVLYLVIATISFLLFFTFFSVWPKEVFNLVFLLLVLFLLNLSYEIFNYFISKKTNPLLYDNYKNLIIAMVFQALLLLFVIITPLVWINTGKSPNFLFVDNRFYTRIVDIFTVQSGKNFIILIAFFFFLITFIVLANTNFFALVINKRYDRNYVKNNLWFILLLFSAIFIWLLRVFAYKHENENLPVGNNHLLWVYILQSFFAIIILILYMVFTLKKRLSVKSSLNTLLNLVVTQTILSLSLFLVTLFNSKSVVSLINVFITITVQMSVFGIYIFQNKNISTKLLVLLKVIMILIILTAAIVGFDYLLTSDHHNNYLFSNIQPKMNLVQIMLLLNFSLNFTLISYLTIKFAMVIFKINKLNKELNNEKK.

12 helical membrane passes run 33 to 53 (FLKG…LIFA), 89 to 109 (LNFL…YTLI), 127 to 147 (PWFV…FTFF), 154 to 174 (VFNL…YEIF), 193 to 213 (LIIA…TPLV), 247 to 267 (IILI…NTNF), 285 to 305 (LWFI…VFAY), 320 to 340 (LWVY…YMVF), 355 to 375 (LLNL…VTLF), 382 to 402 (SLIN…IYIF), 411 to 431 (LLVL…IVGF), and 455 to 475 (VQIM…YLTI).

It localises to the cell membrane. This is an uncharacterized protein from Ureaplasma parvum serovar 3 (strain ATCC 700970).